The chain runs to 256 residues: MGIASSLRLFGKAPASYLFNGFRRQMKNPLMKKGVVYAGVSGTCAAAGYMFGNFVMEKHIYQVKYTEEQEKEVLEVENRLQNLKIVKDLRQNPSFRELRMPFNRSNHSLTNNLLSGPGRITVPPVIFYDKSTRQVYAIAHVGKDVGLDDDTIHPGLIATCMDEVLAICSFLSLPNKIAVTANLKLSNPTKAYTNHFYILRSHLEWTKGRKAQTHGTAYMLDNEDPSKSTCVAIADGLFVEPRFAKYLKHVIPVSLP.

The helical transmembrane segment at 34–56 threads the bilayer; it reads GVVYAGVSGTCAAAGYMFGNFVM.

It belongs to the UPF0644 family.

Its subcellular location is the mitochondrion membrane. The sequence is that of UPF0644 protein PB2B4.06 from Schizosaccharomyces pombe (strain 972 / ATCC 24843) (Fission yeast).